A 754-amino-acid chain; its full sequence is MTILTHTLGFPRVGLRRELKKAQESYWAGNSTREALLAVGRELRARHWEQQKQAGIDLLPVGDFAWYDHVLTTSLLLGNVSARHQNNDGSVDIDTLFRIGRGRAPTGEPAAAAEMTKWFNTNYHYIVPEFSKGQQFRLTWTQLLEEVDEALALGHKIKPVLLGPVTYLWLGKVKGEPFDRLTLLKDILPVYQHVLAELAKRGIEWVQIDEPALVLELPQAWLDAFKPAYDALAGQVKLLLTTYFEGVTPNLDTIIALPVQGLHVDLIHGKDDVAELHQRLPVDWLLSAGLINGRNVWRADLTEKYAQINALVGKRALWVASSCSLLHSPIDLSVETRLDTEVKSWFAFALQKCGELALLRDALNSGETAALEEWSAPIQARRHSRRVHNAAVEKRLAAITAQDSQRENPYEVRAEAQRARFKLPAWPTTTIGSFPQTTEIRGLRLDFKKGNLDANNYHTGIAEHIKQAIIEQERLGLDVLVHGEAERNDMVEYFGEHLDGFVFTQNGWVQSYGSRCVKPPVVIGDISRPAPITVEWAKYAQSLTDKPVKGMLTGPVTILCWSFPREDVTRETIAKQIALALRDEVADLEAAGIGIIQIDEPALREGLPLRRSDWDAYLEWGVEAFRINAAVAKDETQIHTHMCYCEFNDIMDSIAALDADVITIETSRSDMELLESFEAFDYPNEIGPGVYDIHSPNVPSVEWIEALLKKAAQRIPAQRLWVNPDCGLKTRGWPETRAALANMVKAAHNLRQAK.

Residues 17-20 and Lys-117 contribute to the 5-methyltetrahydropteroyltri-L-glutamate site; that span reads RELK. L-homocysteine contacts are provided by residues 431 to 433 and Glu-484; that span reads IGS. Residues 431–433 and Glu-484 each bind L-methionine; that span reads IGS. 5-methyltetrahydropteroyltri-L-glutamate contacts are provided by residues 515–516 and Trp-561; that span reads RC. L-homocysteine is bound at residue Asp-599. Asp-599 contributes to the L-methionine binding site. Glu-605 contributes to the 5-methyltetrahydropteroyltri-L-glutamate binding site. Zn(2+) contacts are provided by His-641, Cys-643, and Glu-665. His-694 functions as the Proton donor in the catalytic mechanism. Zn(2+) is bound at residue Cys-726.

The protein belongs to the vitamin-B12 independent methionine synthase family. Zn(2+) is required as a cofactor.

The enzyme catalyses 5-methyltetrahydropteroyltri-L-glutamate + L-homocysteine = tetrahydropteroyltri-L-glutamate + L-methionine. The protein operates within amino-acid biosynthesis; L-methionine biosynthesis via de novo pathway; L-methionine from L-homocysteine (MetE route): step 1/1. Functionally, catalyzes the transfer of a methyl group from 5-methyltetrahydrofolate to homocysteine resulting in methionine formation. In Salmonella newport (strain SL254), this protein is 5-methyltetrahydropteroyltriglutamate--homocysteine methyltransferase.